Consider the following 248-residue polypeptide: Opiorphin prepropeptide (248 aa).

A signal peptide spans 1–21 (MKLTFFLGLLALISCFTPSES). Glutamine 22 is subject to Pyrrolidone carboxylic acid. A disordered region spans residues 150–198 (DTTITTNPPTTATATTSTSTKPTMTISSSTVPISSTPEPATSISAATPA). N-linked (GlcNAc...) asparagine glycosylation is present at asparagine 218.

The protein belongs to the PROL1/PROL3 family. In terms of tissue distribution, abundantly expressed in lacrimal gland where it found in the secretory endpieces. Also expressed at modest levels in the submandibular gland.

Its subcellular location is the secreted. In terms of biological role, opiorphin is an endogenous inhibitor of neprilysin and aminopeptidase N. Inhibits the breakdown of substance P, Mca-BK2 and Met-enkephalin by neprilysin in vitro with IC(50) values of 29 uM, 33 uM and 33 uM respectively. Inhibits the breakdown of Ala-pNA by aminopeptidase N in vitro with an IC(50) of 65 uM. Has a potent analgesic effect when administered to rats by intravenous injection. This is Opiorphin prepropeptide from Homo sapiens (Human).